The primary structure comprises 417 residues: Pygopus homolog 1 (417 aa).

Residues 1–11 (MSAEQDKEPIA) are compositionally biased toward basic and acidic residues. 3 disordered regions span residues 1–71 (MSAE…AANP), 175–265 (HFRQ…MEDP), and 284–318 (ENSRSGSAEATNNHANGTQNKPRQPRGAADLCTPD). The segment covering 18–27 (GDSGLDGLGG) has biased composition (gly residues). The Nuclear localization signal motif lies at 35 to 41 (PDKKKRK). Polar residues-rich tracts occupy residues 180–221 (SAEN…TNHS), 240–256 (DFTQGATKTPNQNSSTH), and 284–305 (ENSRSGSAEATNNHANGTQNKP). The segment at 338 to 396 (VYPCGICTNEVNDDQDAILCEASCQKWFHRICTGMTETAYGLLTAEASAVWGCDTCMAD) adopts a PHD-type zinc-finger fold. Positions 339–386 (YPCGICTNEVNDDQDAILCEASCQKWFHRICTGMTETAYGLLTAEASA) are interaction with H3K4me2. The interval 371-389 (GMTETAYGLLTAEASAVWG) is interaction with BCL9.

In terms of assembly, interacts with BCL9 via The PHD-type zinc finger motiv, and thereby becomes part of the nuclear beta-catenin/TCF complex. Found in a complex with BCL9L, CDC73, CTNNB1 and PYGO1. Interacts with histone H3 mono-, di- or tri-methylated at 'Lys4' (H3K4me1, H3K4me2, H3K4me3); the interaction is enhanced by the interaction with BCL9.

It is found in the nucleus. In terms of biological role, involved in signal transduction through the Wnt pathway. The protein is Pygopus homolog 1 (Pygo1) of Mus musculus (Mouse).